We begin with the raw amino-acid sequence, 176 residues long: ATP synthase subunit delta (176 aa).

The protein belongs to the ATPase delta chain family. As to quaternary structure, F-type ATPases have 2 components, F(1) - the catalytic core - and F(0) - the membrane proton channel. F(1) has five subunits: alpha(3), beta(3), gamma(1), delta(1), epsilon(1). F(0) has three main subunits: a(1), b(2) and c(10-14). The alpha and beta chains form an alternating ring which encloses part of the gamma chain. F(1) is attached to F(0) by a central stalk formed by the gamma and epsilon chains, while a peripheral stalk is formed by the delta and b chains.

Its subcellular location is the cell inner membrane. F(1)F(0) ATP synthase produces ATP from ADP in the presence of a proton or sodium gradient. F-type ATPases consist of two structural domains, F(1) containing the extramembraneous catalytic core and F(0) containing the membrane proton channel, linked together by a central stalk and a peripheral stalk. During catalysis, ATP synthesis in the catalytic domain of F(1) is coupled via a rotary mechanism of the central stalk subunits to proton translocation. Functionally, this protein is part of the stalk that links CF(0) to CF(1). It either transmits conformational changes from CF(0) to CF(1) or is implicated in proton conduction. This is ATP synthase subunit delta from Actinobacillus succinogenes (strain ATCC 55618 / DSM 22257 / CCUG 43843 / 130Z).